Reading from the N-terminus, the 273-residue chain is Large ribosomal subunit protein uL2 (273 aa).

Residues 224-260 (AMNPVDHPHGGGEGKTSGGRHPVTPWGKKTKGKKTRK) are disordered. Residues 251-260 (KKTKGKKTRK) show a composition bias toward basic residues.

It belongs to the universal ribosomal protein uL2 family. As to quaternary structure, part of the 50S ribosomal subunit. Forms a bridge to the 30S subunit in the 70S ribosome.

In terms of biological role, one of the primary rRNA binding proteins. Required for association of the 30S and 50S subunits to form the 70S ribosome, for tRNA binding and peptide bond formation. It has been suggested to have peptidyltransferase activity; this is somewhat controversial. Makes several contacts with the 16S rRNA in the 70S ribosome. In Orientia tsutsugamushi (strain Ikeda) (Rickettsia tsutsugamushi), this protein is Large ribosomal subunit protein uL2.